A 433-amino-acid polypeptide reads, in one-letter code: 4-hydroxy-3-methylbut-2-en-1-yl diphosphate synthase (flavodoxin) (433 aa).

Polar residues predominate over residues 1–10 (MRYMQDSSMP). The disordered stretch occupies residues 1 to 24 (MRYMQDSSMPCQDASPPDVGAAPR). [4Fe-4S] cluster is bound by residues Cys-320, Cys-323, Cys-366, and Glu-373.

It belongs to the IspG family. The cofactor is [4Fe-4S] cluster.

The catalysed reaction is (2E)-4-hydroxy-3-methylbut-2-enyl diphosphate + oxidized [flavodoxin] + H2O + 2 H(+) = 2-C-methyl-D-erythritol 2,4-cyclic diphosphate + reduced [flavodoxin]. It participates in isoprenoid biosynthesis; isopentenyl diphosphate biosynthesis via DXP pathway; isopentenyl diphosphate from 1-deoxy-D-xylulose 5-phosphate: step 5/6. Converts 2C-methyl-D-erythritol 2,4-cyclodiphosphate (ME-2,4cPP) into 1-hydroxy-2-methyl-2-(E)-butenyl 4-diphosphate. This chain is 4-hydroxy-3-methylbut-2-en-1-yl diphosphate synthase (flavodoxin), found in Bordetella bronchiseptica (strain ATCC BAA-588 / NCTC 13252 / RB50) (Alcaligenes bronchisepticus).